The primary structure comprises 406 residues: Argininosuccinate synthase (406 aa).

ATP-binding positions include 10–18 (AYSGGLDTS) and Ala37. 2 residues coordinate L-citrulline: Tyr88 and Ser93. Gly118 lines the ATP pocket. L-aspartate is bound by residues Thr120, Asn124, and Asp125. Residue Asn124 coordinates L-citrulline. 5 residues coordinate L-citrulline: Arg128, Ser179, Ser188, Glu264, and Tyr276.

The protein belongs to the argininosuccinate synthase family. Type 1 subfamily. Homotetramer.

Its subcellular location is the cytoplasm. It catalyses the reaction L-citrulline + L-aspartate + ATP = 2-(N(omega)-L-arginino)succinate + AMP + diphosphate + H(+). It participates in amino-acid biosynthesis; L-arginine biosynthesis; L-arginine from L-ornithine and carbamoyl phosphate: step 2/3. The protein is Argininosuccinate synthase of Azotobacter vinelandii (strain DJ / ATCC BAA-1303).